Consider the following 1597-residue polypeptide: Glucosyltransferase-I (1597 aa).

The N-terminal stretch at 1-38 (MEKNERFKMHKVKKRWVTISVASATMLASALGASVASA) is a signal peptide. Positions 52 to 120 (LTADQTTTNQ…QTTTNANEAK (69 aa)) are disordered. A compositionally biased stretch (low complexity) spans 53–114 (TADQTTTNQD…STDTAAQTTT (62 aa)). Cell wall-binding repeat units follow at residues 157–176 (MSNV…DGNV) and 178–197 (KNFA…TGAY). The interval 200 to 1050 (TSKVEADKSG…DQASNKYLNV (851 aa)) is catalytic; approximate. Cell wall-binding repeat units follow at residues 1089–1108 (TDSF…DGYM), 1109–1128 (VTGA…NGAA), 1130–1150 (RNTV…DGKR), 1152–1172 (ENGY…GVMA), 1173–1191 (LGLT…DGVQ), 1193–1214 (KDKI…NGNA), 1216–1236 (TNTF…DGVA), 1237–1256 (VTGA…NGQQ), 1258–1279 (KGDF…SGDM), 1281–1301 (TNTF…DGAA), 1302–1321 (VTGA…NGQQ), 1323–1343 (KGDI…QTGE), 1344–1365 (QVFN…DGTA), 1366–1380 (QTQA…KDGS), 1415–1434 (LTGA…NGHQ), 1436–1457 (KGQL…SGDQ), 1459–1478 (FNKS…DGTA), 1485–1505 (KGQT…EGQY), 1508–1527 (GSGW…DGKV), 1528–1547 (LTGL…NGIQ), 1549–1570 (KGKA…SGSM), and 1572–1591 (TNQW…DGAA). The glucan-binding; approximate stretch occupies residues 1099–1597 (LYYFGQDGYM…DGAAVYRGWN (499 aa)).

The protein belongs to the glycosyl hydrolase 70 family.

It is found in the secreted. It catalyses the reaction [(1-&gt;6)-alpha-D-glucosyl](n) + sucrose = [(1-&gt;6)-alpha-D-glucosyl](n+1) + D-fructose. Functionally, production of extracellular glucans, that are thought to play a key role in the development of the dental plaque because of their ability to adhere to smooth surfaces and mediate the aggregation of bacterial cells and food debris. This is Glucosyltransferase-I (gtfI) from Streptococcus downei (Streptococcus sobrinus).